The following is a 177-amino-acid chain: Interleukin-7 (177 aa).

An N-terminal signal peptide occupies residues 1–25 (MFHVSFRYIFGLPPLILVLLPVASS). Intrachain disulfides connect Cys-27–Cys-166, Cys-59–Cys-154, and Cys-72–Cys-117. 3 N-linked (GlcNAc...) asparagine glycosylation sites follow: Asn-95, Asn-116, and Asn-141.

It belongs to the IL-7/IL-9 family. Interacts with IL7R and CSF2RG.

Its subcellular location is the secreted. In terms of biological role, hematopoietic cytokine that plays an essential role in the development, expansion, and survival of naive and memory T-cells and B-cells thereby regulating the number of mature lymphocytes and maintaining lymphoid homeostasis. Mechanistically, exerts its biological effects through a receptor composed of IL7RA subunit and the cytokine receptor common subunit gamma/CSF2RG. Binding to the receptor leads to activation of various kinases including JAK1 or JAK3 depending on the cell type and subsequently propagation of signals through activation of several downstream signaling pathways including the PI3K/Akt/mTOR or the JAK-STAT5. In Homo sapiens (Human), this protein is Interleukin-7 (IL7).